Here is a 32-residue protein sequence, read N- to C-terminus: Natriuretic peptide Coa_NP2 (32 aa).

An intrachain disulfide couples C8 to C24.

This sequence belongs to the natriuretic peptide family. Snake NP subfamily. As to expression, expressed by the venom gland.

The protein resides in the secreted. Its function is as follows. Snake venom natriuretic peptide that exhibits hypotensive and vasorelaxant effects. Produces a dose-dependent hypotension in rats, followed by significant increases in concentrations of markers of nitric oxide (NO) formation measured in the plasma and vasorelaxation in a thoracic aortic ring bath. The peptide may exert its hypotensive action, at least in part, through stimulation of NO production. The vasorelaxant effect is endothelium-dependent and does not appear to be mediated by the natriuretic peptide receptor-A, as its action is not modified by isatin (a potent NPR1 antagonist). May act by activating the natriuretic peptide receptor-B (NPR2). The chain is Natriuretic peptide Coa_NP2 from Crotalus lutosus abyssus (Grand Canyon rattlesnake).